Reading from the N-terminus, the 404-residue chain is MKLPIYLDYSATTPVDPRVAEKMMQFLTLDGTFGNPASRSHRFGWQAEEAVDIARNQIAELVGADPREIVFTSGATESDNLAIKGAANFYQKKGKHIITSKTEHKAVLDTCRQLEREGFEVTYLAPQRNGIIDLNELEAAMRDDTILVSIMHVNNEIGVVQDIATIGEMCRARGIIYHVDATQSVGKLPIDLSQLKVDLMSFSGHKIYGPKGIGALYVRRKPRIRIEAQMHGGGHERGMRSGTLPVHQIVGMGEAYRIAKEEMETEMARLRGLRNRLWNGIKDIEEVYLNGDLEQGAPNILNVSFNYVEGESLIMALKDLAVSSGSACTSASLEPSYVLRALGMNDELAHSSIRFSLGRFTTEEEIDYTIDLVRKSIGRLRDLSPLWEMYKQGVDLNSIEWAHH.

Pyridoxal 5'-phosphate is bound by residues 75 to 76 (AT), Asn-155, Gln-183, and 203 to 205 (SGH). The residue at position 206 (Lys-206) is an N6-(pyridoxal phosphate)lysine. Residue Thr-243 coordinates pyridoxal 5'-phosphate. Cys-328 acts as the Cysteine persulfide intermediate in catalysis. Cys-328 serves as a coordination point for [2Fe-2S] cluster.

This sequence belongs to the class-V pyridoxal-phosphate-dependent aminotransferase family. NifS/IscS subfamily. As to quaternary structure, homodimer. Forms a heterotetramer with IscU, interacts with other sulfur acceptors. The cofactor is pyridoxal 5'-phosphate.

It is found in the cytoplasm. It catalyses the reaction (sulfur carrier)-H + L-cysteine = (sulfur carrier)-SH + L-alanine. It functions in the pathway cofactor biosynthesis; iron-sulfur cluster biosynthesis. Master enzyme that delivers sulfur to a number of partners involved in Fe-S cluster assembly, tRNA modification or cofactor biosynthesis. Catalyzes the removal of elemental sulfur and selenium atoms from cysteine and selenocysteine to produce alanine. Functions as a sulfur delivery protein for Fe-S cluster synthesis onto IscU, an Fe-S scaffold assembly protein, as well as other S acceptor proteins. Also functions as a selenium delivery protein in the pathway for the biosynthesis of selenophosphate. This Salmonella gallinarum (strain 287/91 / NCTC 13346) protein is Cysteine desulfurase IscS.